The chain runs to 345 residues: Platelet-derived growth factor C (345 aa).

A signal peptide spans 1-22; the sequence is MLLLGLLLLTSALAGQRTGTRA. The segment covering 24 to 33 has biased composition (polar residues); sequence SNLSSKLQLS. Positions 24-45 are disordered; that stretch reads SNLSSKLQLSSDKEQNGVQDPR. An N-linked (GlcNAc...) asparagine glycan is attached at asparagine 25. Over residues 34–45 the composition is skewed to basic and acidic residues; that stretch reads SDKEQNGVQDPR. Residues 46 to 163 enclose the CUB domain; it reads HERVVTISGN…PGFCIHYSII (118 aa). N-linked (GlcNAc...) asparagine glycosylation occurs at asparagine 55. 4 disulfides stabilise this stretch: cysteine 104/cysteine 124, cysteine 250/cysteine 294, cysteine 280/cysteine 335, and cysteine 287/cysteine 337.

This sequence belongs to the PDGF/VEGF growth factor family. In terms of assembly, homodimer; disulfide-linked. Interacts with PDGFRA homodimers, and with heterodimers formed by PDGFRA and PDGFRB. Interacts (via CUB domain) with PLAT (via kringle domain). In terms of processing, proteolytic removal of the N-terminal CUB domain releasing the core domain is necessary for unmasking the receptor-binding epitopes of the core domain. Cleavage after basic residues in the hinge region (region connecting the CUB and growth factor domains) gives rise to the receptor-binding form. Cleaved by PLAT and PLG. Sumoylated by SUMO1. Post-translationally, N-glycosylated. As to expression, mainly expressed in kidney, testis, liver, heart and brain (at protein level). Highly expressed in airway epithelium, interstitial cells and alveolar macrophages in the lung of mice overexpressing IL13. Expressed in the ovaries.

The protein localises to the cytoplasm. The protein resides in the cytosol. It localises to the secreted. It is found in the nucleus. Its subcellular location is the cytoplasmic granule. The protein localises to the cell membrane. Its function is as follows. Growth factor that plays an essential role in the regulation of embryonic development, cell proliferation, cell migration, survival and chemotaxis. Potent mitogen and chemoattractant for cells of mesenchymal origin. Required for normal skeleton formation during embryonic development, especially for normal development of the craniofacial skeleton and for normal development of the palate. Required for normal skin morphogenesis during embryonic development. Plays an important role in wound healing, where it appears to be involved in three stages: inflammation, proliferation and remodeling. Plays an important role in angiogenesis and blood vessel development. Involved in fibrotic processes, in which transformation of interstitial fibroblasts into myofibroblasts plus collagen deposition occurs. The CUB domain has mitogenic activity in coronary artery smooth muscle cells, suggesting a role beyond the maintenance of the latency of the PDGF domain. In the nucleus, PDGFC seems to have additional function. The protein is Platelet-derived growth factor C (Pdgfc) of Mus musculus (Mouse).